Reading from the N-terminus, the 441-residue chain is ATP-dependent protease ATPase subunit HslU (441 aa).

Residues valine 18, 60–65, aspartate 253, glutamate 319, and arginine 391 each bind ATP; that span reads GVGKTE.

The protein belongs to the ClpX chaperone family. HslU subfamily. As to quaternary structure, a double ring-shaped homohexamer of HslV is capped on each side by a ring-shaped HslU homohexamer. The assembly of the HslU/HslV complex is dependent on binding of ATP.

It localises to the cytoplasm. Its function is as follows. ATPase subunit of a proteasome-like degradation complex; this subunit has chaperone activity. The binding of ATP and its subsequent hydrolysis by HslU are essential for unfolding of protein substrates subsequently hydrolyzed by HslV. HslU recognizes the N-terminal part of its protein substrates and unfolds these before they are guided to HslV for hydrolysis. The chain is ATP-dependent protease ATPase subunit HslU from Nitratidesulfovibrio vulgaris (strain DP4) (Desulfovibrio vulgaris).